The following is a 398-amino-acid chain: Putative FBD-associated F-box protein At5g56700 (398 aa).

The F-box domain maps to 1-47 (MAKISDLSDELLVKILSFLPTKEAVSTSCLSKQWEFLWMWLSKLEFY). One can recognise an FBD domain in the interval 340–388 (WKNNKSSVPKCLLESLETFEFAGYIGTPEERDFLSYIFKHARCLKSSSI).

The protein is Putative FBD-associated F-box protein At5g56700 of Arabidopsis thaliana (Mouse-ear cress).